Reading from the N-terminus, the 351-residue chain is Glycerol-1-phosphate dehydrogenase [NAD(P)+] (351 aa).

Residues 97–101 (GKVID) and 119–122 (TSPS) each bind NAD(+). Substrate is bound at residue aspartate 124. Serine 128 serves as a coordination point for NAD(+). Residue aspartate 171 participates in substrate binding. The Zn(2+) site is built by aspartate 171 and histidine 251. Position 255 (histidine 255) interacts with substrate. Residue histidine 267 coordinates Zn(2+).

The protein belongs to the glycerol-1-phosphate dehydrogenase family. In terms of assembly, homodimer. Requires Zn(2+) as cofactor.

Its subcellular location is the cytoplasm. The enzyme catalyses sn-glycerol 1-phosphate + NAD(+) = dihydroxyacetone phosphate + NADH + H(+). It catalyses the reaction sn-glycerol 1-phosphate + NADP(+) = dihydroxyacetone phosphate + NADPH + H(+). The protein operates within membrane lipid metabolism; glycerophospholipid metabolism. Its function is as follows. Catalyzes the NAD(P)H-dependent reduction of dihydroxyacetonephosphate (DHAP or glycerone phosphate) to glycerol 1-phosphate (G1P). The G1P thus generated is used as the glycerophosphate backbone of phospholipids in the cellular membranes of Archaea. The sequence is that of Glycerol-1-phosphate dehydrogenase [NAD(P)+] from Saccharolobus islandicus (strain Y.N.15.51 / Yellowstone #2) (Sulfolobus islandicus).